The primary structure comprises 926 residues: MPGILPMKVIKVGNSSQSRIAQACDRCRSKKIRCDGIRPCCSQCANVGFECKTSDKLSRRAFPRGYTESLEERVRALEAEIRELKDLLDEKDEKLDMLSKMHSNRSRSAEPPRSTPAAEIKRDSGTPAKEDTFRVQASPLLLGVENSDSYFMGASSGRSFIETFKRKIQENGKSCTDFNPEAFLHIQGCYPLSTKLAPQSMRIPPRLFSDRCVNVYFQEWAPLFPVLHKPAFLRVYEEFVADPEKIKNNHKLTQLYLVFSIAGLSSEQPDFQQLAACETQWHKSLEAVLMDNTMLTLQCLILALMYCTVRADYKRLQYYKGIAVGLSHRLGLHQSQKRFSFGALTIETRKKVFWTLYTLDCFSAAILGLPKLLKDEDVHAEFPSDTDDENVTEKGFQPSLPGEPTRISSALALFRGSRILGKVLEKIYPAATSYELSLQQMSSLEGELTEWFENLPQHLKLNFKQDKPSTDVTGSRSPLLALAYYYTRILIYRPAIASSLGPKAAPALMSVAESSKSIVQIVQLLEERSMSFSFCLNKADILIVCGMALLYQTLGLKHDSKVLKDNEKLVNSVVKIVTKVNAPGSYDFKRIAGMLVTVEESLPQSLPTPPRQSPEACMPTPPAQQGSPSPSAVDRGAQPNLARQSSASLSETDLIVQRDKLLGMAVTPQHQQYQHQQLQQQHKNELSRARSQTSFDNLRQKAQQMRPHHRHSLSHAQVAQAALMGRTSTGTQSTPNLDYLSLSSPQSPVSPVQMRSQPHQLQQQQQQQPQPQQQQQQHQRSSIASSHSQQGQMFPQKTSTGMSTAEWEALVRSLDGGPVSLYTAIYGGPALAPLETPSSATQSSATAWGQDPWDMSSFNLGDFVPGAPTAQSVLSLSEESISSCDDVPSSDMGLNNGNMDYRNTLLPVTSAGTNNFLLDGLHGYGL.

Positions 24-51 (CDRCRSKKIRCDGIRPCCSQCANVGFEC) form a DNA-binding region, zn(2)-C6 fungal-type. Disordered regions lie at residues 100 to 129 (KMHSNRSRSAEPPRSTPAAEIKRDSGTPAK), 602 to 649 (LPQS…SASL), and 667 to 801 (TPQH…TSTG). The segment covering 119–129 (EIKRDSGTPAK) has biased composition (basic and acidic residues). Composition is skewed to low complexity over residues 623–632 (AQQGSPSPSA) and 669–681 (QHQQYQHQQLQQQ). Composition is skewed to polar residues over residues 689 to 703 (ARSQTSFDNLRQKAQ) and 726 to 736 (RTSTGTQSTPN). A compositionally biased stretch (low complexity) spans 740–792 (LSLSSPQSPVSPVQMRSQPHQLQQQQQQQPQPQQQQQQHQRSSIASSHSQQGQ).

It is found in the nucleus. In terms of biological role, positive regulator of acetate induction. The sequence is that of Transcriptional activator protein acu-15 (acu-15) from Neurospora crassa (strain ATCC 24698 / 74-OR23-1A / CBS 708.71 / DSM 1257 / FGSC 987).